The sequence spans 150 residues: Interferon antagonist OPG027 (150 aa).

It belongs to the orthopoxvirus OPG027 family.

Its function is as follows. Inhibits antiviral activity induced by type I interferons. Does not block signal transduction of IFN, but is important to counteract the host antiviral state induced by a pre-treatment with IFN. The sequence is that of Interferon antagonist OPG027 (OPG027) from Homo sapiens (Human).